The chain runs to 194 residues: Protein GrpE (194 aa).

Residues 1 to 14 (MENTQENPTSQNPT) show a composition bias toward polar residues. A disordered region spans residues 1–50 (MENTQENPTSQNPTPADETARQAAEAAAPQQEAAANAATDSPVNAEQSAL). Residues 21–38 (RQAAEAAAPQQEAAANAA) are compositionally biased toward low complexity.

It belongs to the GrpE family. Homodimer.

It localises to the cytoplasm. Functionally, participates actively in the response to hyperosmotic and heat shock by preventing the aggregation of stress-denatured proteins, in association with DnaK and GrpE. It is the nucleotide exchange factor for DnaK and may function as a thermosensor. Unfolded proteins bind initially to DnaJ; upon interaction with the DnaJ-bound protein, DnaK hydrolyzes its bound ATP, resulting in the formation of a stable complex. GrpE releases ADP from DnaK; ATP binding to DnaK triggers the release of the substrate protein, thus completing the reaction cycle. Several rounds of ATP-dependent interactions between DnaJ, DnaK and GrpE are required for fully efficient folding. The sequence is that of Protein GrpE from Paraburkholderia phytofirmans (strain DSM 17436 / LMG 22146 / PsJN) (Burkholderia phytofirmans).